The primary structure comprises 668 residues: DNA ligase (668 aa).

NAD(+) contacts are provided by residues aspartate 37–aspartate 41, serine 86–leucine 87, and glutamate 116. Catalysis depends on lysine 118, which acts as the N6-AMP-lysine intermediate. Arginine 139, glutamate 176, lysine 289, and lysine 313 together coordinate NAD(+). The Zn(2+) site is built by cysteine 407, cysteine 410, cysteine 425, and cysteine 430. The BRCT domain occupies alanine 586–proline 668.

Belongs to the NAD-dependent DNA ligase family. LigA subfamily. It depends on Mg(2+) as a cofactor. Requires Mn(2+) as cofactor.

The enzyme catalyses NAD(+) + (deoxyribonucleotide)n-3'-hydroxyl + 5'-phospho-(deoxyribonucleotide)m = (deoxyribonucleotide)n+m + AMP + beta-nicotinamide D-nucleotide.. In terms of biological role, DNA ligase that catalyzes the formation of phosphodiester linkages between 5'-phosphoryl and 3'-hydroxyl groups in double-stranded DNA using NAD as a coenzyme and as the energy source for the reaction. It is essential for DNA replication and repair of damaged DNA. The protein is DNA ligase of Gloeobacter violaceus (strain ATCC 29082 / PCC 7421).